The primary structure comprises 107 residues: Protein TAP1 (107 aa).

The N-terminal stretch at 1-23 (MESKRVDVLVGLMLIMAIFGVHS) is a signal peptide.

As to expression, stamen.

The sequence is that of Protein TAP1 (TAP1) from Antirrhinum majus (Garden snapdragon).